The following is a 483-amino-acid chain: GTPase Der (483 aa).

EngA-type G domains are found at residues 3-167 (FTLA…GEER) and 212-387 (LRIA…EIWN). GTP-binding positions include 9–16 (GRPNVGKS), 56–60 (DTAGL), 119–122 (NKAE), 218–225 (GRPNAGKS), 265–269 (DTAGM), and 330–333 (NKWD). Residues 388–472 (RRISTGRLNR…PIRLSLRTSD (85 aa)) form the KH-like domain.

This sequence belongs to the TRAFAC class TrmE-Era-EngA-EngB-Septin-like GTPase superfamily. EngA (Der) GTPase family. In terms of assembly, associates with the 50S ribosomal subunit.

GTPase that plays an essential role in the late steps of ribosome biogenesis. This Brucella abortus (strain 2308) protein is GTPase Der.